The sequence spans 411 residues: Probable indole-3-pyruvate monooxygenase YUCCA4 (411 aa).

21-26 (GAGPSG) is a binding site for FAD. 183-188 (GCGNSG) contacts NADP(+).

This sequence belongs to the FMO family. FAD serves as cofactor. As to expression, expressed in leaves, stems, flowers, buds and siliques. Detected in the apical gynoecium and in the developing ovules.

Its subcellular location is the cytoplasm. The protein localises to the endoplasmic reticulum membrane. The enzyme catalyses indole-3-pyruvate + NADPH + O2 + H(+) = (indol-3-yl)acetate + CO2 + NADP(+) + H2O. The protein operates within plant hormone metabolism; auxin biosynthesis. Functionally, involved in auxin biosynthesis. Both isoforms are catalitically active. Involved during embryogenesis and seedling development. Required for the formation of floral organs and vascular tissues. Belongs to the set of redundant YUCCA genes probably responsible for auxin biosynthesis in shoots. In Arabidopsis thaliana (Mouse-ear cress), this protein is Probable indole-3-pyruvate monooxygenase YUCCA4 (YUC4).